Consider the following 793-residue polypeptide: Sucrose synthase (793 aa).

Residues Met263–Thr742 are GT-B glycosyltransferase.

Belongs to the glycosyltransferase 1 family. Homotetramer.

The catalysed reaction is an NDP-alpha-D-glucose + D-fructose = a ribonucleoside 5'-diphosphate + sucrose + H(+). The enzyme catalyses ADP-alpha-D-glucose + D-fructose = sucrose + ADP + H(+). In terms of biological role, catalyzes the reversible conversion of sucrose and a nucleotide disphosphate (NDP) into fructose and NDP-glucose; although the reaction is freely reversible in vitro, the physiological reaction seems to be sucrose cleavage. Unlike characterized plant enzymes prefers ADP as a cosubstrate, whereas plants prefer UDP. The KM for sucrose is 45-fold lower in the presence of ADP than UDP. Its preference for ADP over UDP suggests it may directly link sucrose and glycogen metabolism. The sequence is that of Sucrose synthase from Acidithiobacillus caldus (strain ATCC 51756 / DSM 8584 / KU).